We begin with the raw amino-acid sequence, 397 residues long: CCA-adding enzyme (397 aa).

ATP contacts are provided by Gly27 and Arg30. CTP-binding residues include Gly27 and Arg30. 2 residues coordinate Mg(2+): Asp40 and Asp42. Arg111, Asp154, Arg157, Arg160, and Arg163 together coordinate ATP. The CTP site is built by Arg111, Asp154, Arg157, Arg160, and Arg163.

It belongs to the tRNA nucleotidyltransferase/poly(A) polymerase family. Bacterial CCA-adding enzyme type 3 subfamily. Homodimer. The cofactor is Mg(2+).

It carries out the reaction a tRNA precursor + 2 CTP + ATP = a tRNA with a 3' CCA end + 3 diphosphate. The catalysed reaction is a tRNA with a 3' CCA end + 2 CTP + ATP = a tRNA with a 3' CCACCA end + 3 diphosphate. Its function is as follows. Catalyzes the addition and repair of the essential 3'-terminal CCA sequence in tRNAs without using a nucleic acid template. Adds these three nucleotides in the order of C, C, and A to the tRNA nucleotide-73, using CTP and ATP as substrates and producing inorganic pyrophosphate. tRNA 3'-terminal CCA addition is required both for tRNA processing and repair. Also involved in tRNA surveillance by mediating tandem CCA addition to generate a CCACCA at the 3' terminus of unstable tRNAs. While stable tRNAs receive only 3'-terminal CCA, unstable tRNAs are marked with CCACCA and rapidly degraded. The protein is CCA-adding enzyme of Bacillus licheniformis (strain ATCC 14580 / DSM 13 / JCM 2505 / CCUG 7422 / NBRC 12200 / NCIMB 9375 / NCTC 10341 / NRRL NRS-1264 / Gibson 46).